The primary structure comprises 348 residues: Hereditary hemochromatosis protein (348 aa).

Residues 1-22 form the signal peptide; sequence MGPRARPALLLLMLLQTAVLQG. An alpha-1 region spans residues 23–114; sequence RLLRSHSLHY…IMENHNHSKE (92 aa). Over 23–306 the chain is Extracellular; that stretch reads RLLRSHSLHY…WEPSPSGTLV (284 aa). 3 N-linked (GlcNAc...) asparagine glycosylation sites follow: Asn-110, Asn-130, and Asn-234. The tract at residues 115–205 is alpha-2; it reads SHTLQVILGC…ELGRGVLDQQ (91 aa). Disulfide bonds link Cys-124-Cys-187 and Cys-225-Cys-282. The interval 206 to 297 is alpha-3; it reads VPPLVKVTHH…GLDQPLIVIW (92 aa). One can recognise an Ig-like C1-type domain in the interval 207 to 298; that stretch reads PPLVKVTHHV…LDQPLIVIWE (92 aa). The segment at 298–306 is connecting peptide; sequence EPSPSGTLV. A helical transmembrane segment spans residues 307–330; sequence IGVISGIAVFVVILFIGILFIILR. Over 331–348 the chain is Cytoplasmic; the sequence is KRQGSRGAMGHYVLAERE.

This sequence belongs to the MHC class I family. In terms of assembly, binds TFR through the extracellular domain in a pH-dependent manner. Expressed in all tissues tested except brain.

It localises to the cell membrane. Functionally, binds to transferrin receptor (TFR) and reduces its affinity for iron-loaded transferrin. The protein is Hereditary hemochromatosis protein (HFE) of Homo sapiens (Human).